The following is a 97-amino-acid chain: Apolipoprotein C-II (97 aa).

The first 22 residues, 1 to 22 (MGSRFFLALFLVLLVLGNEVQG), serve as a signal peptide directing secretion. The tract at residues 63–71 (SVDEKLRDM) is lipid binding. The interval 75-97 (SSAAMSTYAGIFTDQLLTLLKGE) is lipoprotein lipase cofactor.

Belongs to the apolipoprotein C2 family. Proapolipoprotein C-II is synthesized as a sialic acid containing glycoprotein which is subsequently desialylated prior to its proteolytic processing. Post-translationally, proapolipoprotein C-II, the major form found in plasma undergoes proteolytic cleavage of its N-terminal hexapeptide to generate the mature form apolipoprotein C-II, which occurs as the minor form in plasma.

Its subcellular location is the secreted. Component of chylomicrons, very low-density lipoproteins (VLDL), low-density lipoproteins (LDL), and high-density lipoproteins (HDL) in plasma. Plays an important role in lipoprotein metabolism as an activator of lipoprotein lipase. The sequence is that of Apolipoprotein C-II (Apoc2) from Grammomys surdaster (African woodland thicket rat).